The primary structure comprises 271 residues: ATP synthase subunit delta (271 aa).

It belongs to the ATPase delta chain family. In terms of assembly, F-type ATPases have 2 components, F(1) - the catalytic core - and F(0) - the membrane proton channel. F(1) has five subunits: alpha(3), beta(3), gamma(1), delta(1), epsilon(1). F(0) has three main subunits: a(1), b(2) and c(10-14). The alpha and beta chains form an alternating ring which encloses part of the gamma chain. F(1) is attached to F(0) by a central stalk formed by the gamma and epsilon chains, while a peripheral stalk is formed by the delta and b chains.

The protein localises to the cell membrane. F(1)F(0) ATP synthase produces ATP from ADP in the presence of a proton or sodium gradient. F-type ATPases consist of two structural domains, F(1) containing the extramembraneous catalytic core and F(0) containing the membrane proton channel, linked together by a central stalk and a peripheral stalk. During catalysis, ATP synthesis in the catalytic domain of F(1) is coupled via a rotary mechanism of the central stalk subunits to proton translocation. In terms of biological role, this protein is part of the stalk that links CF(0) to CF(1). It either transmits conformational changes from CF(0) to CF(1) or is implicated in proton conduction. This chain is ATP synthase subunit delta, found in Corynebacterium aurimucosum (strain ATCC 700975 / DSM 44827 / CIP 107346 / CN-1) (Corynebacterium nigricans).